Reading from the N-terminus, the 142-residue chain is Hemoglobin subunit alpha (142 aa).

Residues 2–142 (VLSATDKSNV…VSTVLTSKYR (141 aa)) enclose the Globin domain. Residue Ser4 is modified to Phosphoserine. An N6-succinyllysine mark is found at Lys8 and Lys12. The residue at position 17 (Lys17) is an N6-acetyllysine; alternate. Position 17 is an N6-succinyllysine; alternate (Lys17). A Phosphotyrosine modification is found at Tyr25. Position 36 is a phosphoserine (Ser36). N6-succinyllysine is present on Lys41. At Ser50 the chain carries Phosphoserine. His59 serves as a coordination point for O2. Residue His88 coordinates heme b. Ser103 is modified (phosphoserine). At Thr109 the chain carries Phosphothreonine. Position 125 is a phosphoserine (Ser125). A phosphothreonine mark is found at Thr135 and Thr138. Ser139 bears the Phosphoserine mark.

It belongs to the globin family. In terms of assembly, heterotetramer of two alpha chains and two beta chains. In terms of tissue distribution, red blood cells.

In terms of biological role, involved in oxygen transport from the lung to the various peripheral tissues. Its function is as follows. Hemopressin acts as an antagonist peptide of the cannabinoid receptor CNR1. Hemopressin-binding efficiently blocks cannabinoid receptor CNR1 and subsequent signaling. The sequence is that of Hemoglobin subunit alpha (HBA) from Alces alces alces (European moose).